Reading from the N-terminus, the 183-residue chain is Adenine phosphoribosyltransferase (183 aa).

It belongs to the purine/pyrimidine phosphoribosyltransferase family. In terms of assembly, homodimer.

The protein localises to the cytoplasm. It carries out the reaction AMP + diphosphate = 5-phospho-alpha-D-ribose 1-diphosphate + adenine. Its pathway is purine metabolism; AMP biosynthesis via salvage pathway; AMP from adenine: step 1/1. Its function is as follows. Catalyzes a salvage reaction resulting in the formation of AMP, that is energically less costly than de novo synthesis. This chain is Adenine phosphoribosyltransferase, found in Sodalis glossinidius (strain morsitans).